Reading from the N-terminus, the 428-residue chain is GTPase Obg (428 aa).

In terms of domain architecture, Obg spans 1–158 (MFVDQVKIYV…RYIVLELKVL (158 aa)). The tract at residues 118-143 (KGGRGGRGNTRFATPANPAPQLSENG) is disordered. One can recognise an OBG-type G domain in the interval 159 to 329 (ADVGLVGFPS…LLFEIADRLE (171 aa)). GTP-binding positions include 165-172 (GFPSVGKS), 190-194 (FTTLN), 212-215 (DLPG), 282-285 (NKMD), and 310-312 (SAV). Residues Ser-172 and Thr-192 each contribute to the Mg(2+) site. In terms of domain architecture, OCT spans 350–428 (KLEDEEAPFE…LLEFEFEFID (79 aa)).

It belongs to the TRAFAC class OBG-HflX-like GTPase superfamily. OBG GTPase family. Monomer. The cofactor is Mg(2+).

The protein resides in the cytoplasm. An essential GTPase which binds GTP, GDP and possibly (p)ppGpp with moderate affinity, with high nucleotide exchange rates and a fairly low GTP hydrolysis rate. Plays a role in control of the cell cycle, stress response, ribosome biogenesis and in those bacteria that undergo differentiation, in morphogenesis control. The polypeptide is GTPase Obg (Bacillus licheniformis (strain ATCC 14580 / DSM 13 / JCM 2505 / CCUG 7422 / NBRC 12200 / NCIMB 9375 / NCTC 10341 / NRRL NRS-1264 / Gibson 46)).